The primary structure comprises 660 residues: Cysteine--tRNA ligase, cytoplasmic (660 aa).

Positions 1–10 (MSENSSPKLE) are enriched in polar residues. Residues 1-20 (MSENSSPKLESTSAAAASTK) form a disordered region. Position 65 (Cys65) interacts with Zn(2+). The short motif at 67–77 (PTVYDASHMGH) is the 'HIGH' region element. Residues Cys256, His281, and Glu285 each coordinate Zn(2+). The 'KMSKS' region motif lies at 314-318 (KMSKS). Lys317 contributes to the ATP binding site. Disordered regions lie at residues 563–584 (IEKK…KFEK) and 627–660 (QKEY…QSPQ). Basic and acidic residues predominate over residues 627–639 (QKEYDNQTKEHNN). Positions 643–660 (SLSTSTSSPTLTSTQSPQ) are enriched in low complexity.

The protein belongs to the class-I aminoacyl-tRNA synthetase family. Zn(2+) is required as a cofactor.

It localises to the cytoplasm. The catalysed reaction is tRNA(Cys) + L-cysteine + ATP = L-cysteinyl-tRNA(Cys) + AMP + diphosphate. The sequence is that of Cysteine--tRNA ligase, cytoplasmic (cysS) from Dictyostelium discoideum (Social amoeba).